Consider the following 430-residue polypeptide: MLPQEVENILDVVIRHNTWRRKETINLIASENVMSPLAELVYINDLAGRYAEGIVGSRYYQGVRYVDILEDALSKKFANVLGARFVDVRPISGTIANLAAYFALVPEGGTVASLPIKYGGHISHNTVGGLKALRLKAVELPWDLENFNIDVDAARKLIEEKRPNLIILGASLYLFPHPVKEIAEVAKTVGAYVLHDSAHVFGLIVGGAFPNPLREGAHLTTASTHKTFPGPQGGVIATVLDEEKNSQIQRAVFPTFTSNYHLHRYAATYVTLVEMEVFGREYATRIVENARALAEALAAEGVPPVAERQGYTKTHQVAVDVSKFGGGDKVAALLEEANIIVNKNALPWDKSVLKPSGIRIGVQEMTRFGMGKDEMREIARFIARVLRGEDVNNIKRDVVEFRKSYLEIKYGFKISRDIVDKIFHSLNLYT.

120–122 provides a ligand contact to (6S)-5,6,7,8-tetrahydrofolate; that stretch reads GHI. K226 is subject to N6-(pyridoxal phosphate)lysine.

Belongs to the SHMT family. Homodimer. Requires pyridoxal 5'-phosphate as cofactor.

It localises to the cytoplasm. The protein operates within amino-acid biosynthesis; glycine biosynthesis; glycine from L-serine: step 1/1. Its function is as follows. Catalyzes the reversible interconversion of serine and glycine with a modified folate serving as the one-carbon carrier. Also exhibits a pteridine-independent aldolase activity toward beta-hydroxyamino acids, producing glycine and aldehydes, via a retro-aldol mechanism. The chain is Serine hydroxymethyltransferase from Pyrobaculum islandicum (strain DSM 4184 / JCM 9189 / GEO3).